An 813-amino-acid polypeptide reads, in one-letter code: Ribosome-releasing factor 2, mitochondrial (813 aa).

The transit peptide at 1–20 (MLRIVWKPLKIRLPVWRRYQ) directs the protein to the mitochondrion. Residues 26-314 (NSIRNVGIIA…AIIDYLPSPV (289 aa)) form the tr-type G domain. Residues 35 to 42 (AHIDAGKT), 99 to 103 (DTPGH), and 153 to 156 (NKMD) contribute to the GTP site.

It belongs to the TRAFAC class translation factor GTPase superfamily. Classic translation factor GTPase family. EF-G/EF-2 subfamily.

The protein localises to the mitochondrion. Functionally, mitochondrial GTPase that mediates the disassembly of ribosomes from messenger RNA at the termination of mitochondrial protein biosynthesis. Not involved in the GTP-dependent ribosomal translocation step during translation elongation. This chain is Ribosome-releasing factor 2, mitochondrial (mef2), found in Schizosaccharomyces pombe (strain 972 / ATCC 24843) (Fission yeast).